The sequence spans 59 residues: Large ribosomal subunit protein uL30 (59 aa).

Belongs to the universal ribosomal protein uL30 family. Part of the 50S ribosomal subunit.

In Rhodococcus jostii (strain RHA1), this protein is Large ribosomal subunit protein uL30.